We begin with the raw amino-acid sequence, 372 residues long: Oxidoreductase ptaL (372 aa).

An N-terminal signal peptide occupies residues 1-16; the sequence is MKHIVIIGGGFAGVST. 6-hydroxy-FAD is bound by residues 8–12 and R51; that span reads GGGFA. N251 is a glycosylation site (N-linked (GlcNAc...) asparagine). D285 is a 6-hydroxy-FAD binding site.

The protein belongs to the FAD-dependent oxidoreductase family. It depends on 6-hydroxy-FAD as a cofactor.

The protein operates within secondary metabolite biosynthesis. Functionally, oxidoreductase; part of the gene cluster that mediates the biosynthesis of pestheic acid, a diphenyl ether which is a biosynthetic precursor of the unique chloropupukeananes. The biosynthesis initiates from condensation of acetate and malonate units catalyzed by the non-reducing PKS ptaA. As the ptaA protein is TE/CLC domain-deficient, hydrolysis and Claisen cyclization of the polyketide could be catalyzed by ptaB containing a beta-lactamase domain. The ptaB protein might hydrolyze the thioester bond between the ACP of ptaA and the intermediate to release atrochrysone carboxylic acid, which is spontaneously dehydrated to form endocrocin anthrone. Endocrocin anthrone is then converted to endocrocin, catalyzed by the anthrone oxygenase ptaC. Spontaneous decarboxylation of endocrocin occurs to generate emodin. An O-methyltransferase (ptaH or ptaI) could methylate emodin to form physcion. PtaJ could then catalyze the oxidative cleavage of physcion, and rotation of the intermediate could then afford desmethylisosulochrin. PtaF, a putative NADH-dependent oxidoreductase, might also participate in the oxidative cleavage step. Desmethylisosulochrin is then transformed by another O-methyltransferase (ptaH or ptaI) to form isosulochrin. Chlorination of isosulochrin by ptaM in the cyclohexadienone B ring then produces chloroisosulochrin. PtaE is responsible for the oxidative coupling reactions of both benzophenones isosulochrin and chloroisosulochrin to RES-1214-1 and pestheic acid respectively, regardless of chlorination. This Pestalotiopsis fici (strain W106-1 / CGMCC3.15140) protein is Oxidoreductase ptaL.